Reading from the N-terminus, the 326-residue chain is Adenosine receptor A1 (326 aa).

The Extracellular segment spans residues Met1 to Ala10. A helical membrane pass occupies residues Ala11–Ala33. Over Val34–Cys46 the chain is Cytoplasmic. The helical transmembrane segment at Phe47–Ile69 threads the bilayer. Over Asn70–Cys80 the chain is Extracellular. Cysteines 80 and 169 form a disulfide. A helical membrane pass occupies residues Leu81–Ala102. Topologically, residues Val103–Arg123 are cytoplasmic. Residues Ala124–Trp146 form a helical membrane-spanning segment. Residues Asn147–Ser176 are Extracellular-facing. A glycan (N-linked (GlcNAc...) asparagine) is linked at Asn159. The helical transmembrane segment at Met177–Leu201 threads the bilayer. Residues Glu202–Ser235 are Cytoplasmic-facing. The chain crosses the membrane as a helical span at residues Leu236 to Phe259. The Extracellular portion of the chain corresponds to Cys260–Ser267. A helical transmembrane segment spans residues Ile268 to Ile292. Topologically, residues Gln293–Asp326 are cytoplasmic. Cys309 carries S-palmitoyl cysteine lipidation.

This sequence belongs to the G-protein coupled receptor 1 family.

It localises to the cell membrane. Receptor for adenosine. The activity of this receptor is mediated by G proteins which inhibit adenylyl cyclase. This is Adenosine receptor A1 (ADORA1) from Canis lupus familiaris (Dog).